We begin with the raw amino-acid sequence, 235 residues long: Pyridoxine/pyridoxamine 5'-phosphate oxidase (235 aa).

Residues 30 to 33 (RQEY) and lysine 88 contribute to the substrate site. FMN is bound by residues 83–88 (RTVLLK), 98–99 (YT), arginine 104, lysine 105, and glutamine 127. Residues tyrosine 145, arginine 149, and serine 153 each contribute to the substrate site. Residues 162-163 (QS) and tryptophan 207 contribute to the FMN site. Position 213 to 215 (213 to 215 (RLH)) interacts with substrate. Arginine 217 provides a ligand contact to FMN.

The protein belongs to the pyridoxamine 5'-phosphate oxidase family. Homodimer. FMN serves as cofactor.

It carries out the reaction pyridoxamine 5'-phosphate + O2 + H2O = pyridoxal 5'-phosphate + H2O2 + NH4(+). The catalysed reaction is pyridoxine 5'-phosphate + O2 = pyridoxal 5'-phosphate + H2O2. It functions in the pathway cofactor metabolism; pyridoxal 5'-phosphate salvage; pyridoxal 5'-phosphate from pyridoxamine 5'-phosphate: step 1/1. Its pathway is cofactor metabolism; pyridoxal 5'-phosphate salvage; pyridoxal 5'-phosphate from pyridoxine 5'-phosphate: step 1/1. Catalyzes the oxidation of either pyridoxine 5'-phosphate (PNP) or pyridoxamine 5'-phosphate (PMP) into pyridoxal 5'-phosphate (PLP). In Bacteroides fragilis (strain YCH46), this protein is Pyridoxine/pyridoxamine 5'-phosphate oxidase.